A 266-amino-acid polypeptide reads, in one-letter code: Enterotoxin type C-2 (266 aa).

Residues 1–27 form the signal peptide; the sequence is MNKSRFISCVILIFALILVLFTPNVLA. Positions 36, 74, 98, 107, and 110 each coordinate Zn(2+). A disulfide bridge links Cys-120 with Cys-137. Residues His-145, Glu-146, and His-149 each contribute to the Zn(2+) site.

This sequence belongs to the staphylococcal/streptococcal toxin family. In terms of assembly, interacts with host MHC class II molecules composed of alpha/HLA-DRA and beta/HLA-DRB1 chains. Requires Zn(2+) as cofactor.

The protein localises to the secreted. Functionally, staphylococcal enterotoxin that activates the host immune system by binding as unprocessed molecules to major histocompatibility (MHC) complex class II and T-cell receptor (TCR) molecules. In turn, this ternary complex activates a large number of T-lymphocytes initiating a systemic release of pro-inflammatory cytokines. Also causes the intoxication staphylococcal food poisoning syndrome. The protein is Enterotoxin type C-2 (entC2) of Staphylococcus aureus.